The chain runs to 196 residues: Probable malonic semialdehyde reductase RutE (196 aa).

Belongs to the nitroreductase family. HadB/RutE subfamily. FMN is required as a cofactor.

The catalysed reaction is 3-hydroxypropanoate + NADP(+) = 3-oxopropanoate + NADPH + H(+). In terms of biological role, may reduce toxic product malonic semialdehyde to 3-hydroxypropionic acid, which is excreted. The chain is Probable malonic semialdehyde reductase RutE from Shigella dysenteriae serotype 1 (strain Sd197).